The sequence spans 420 residues: UDP-N-acetylglucosamine 1-carboxyvinyltransferase (420 aa).

22-23 (KN) serves as a coordination point for phosphoenolpyruvate. R93 contributes to the UDP-N-acetyl-alpha-D-glucosamine binding site. The active-site Proton donor is the C117. 2-(S-cysteinyl)pyruvic acid O-phosphothioketal is present on C117. UDP-N-acetyl-alpha-D-glucosamine is bound by residues D307 and I329.

Belongs to the EPSP synthase family. MurA subfamily.

Its subcellular location is the cytoplasm. The catalysed reaction is phosphoenolpyruvate + UDP-N-acetyl-alpha-D-glucosamine = UDP-N-acetyl-3-O-(1-carboxyvinyl)-alpha-D-glucosamine + phosphate. The protein operates within cell wall biogenesis; peptidoglycan biosynthesis. In terms of biological role, cell wall formation. Adds enolpyruvyl to UDP-N-acetylglucosamine. The protein is UDP-N-acetylglucosamine 1-carboxyvinyltransferase of Shewanella pealeana (strain ATCC 700345 / ANG-SQ1).